A 388-amino-acid polypeptide reads, in one-letter code: Chaperone protein DnaJ (388 aa).

One can recognise a J domain in the interval 4–69 (DYYDILGVDE…EKRQRYDQFG (66 aa)). Basic and acidic residues-rich tracts occupy residues 27-50 (KAME…KEAS), 58-73 (DPEK…HDGV), and 113-124 (GRSERGRGRPGS). Disordered regions lie at residues 27–86 (KAME…GRGR) and 99–125 (SDIF…PGSD). The segment at 140 to 225 (GTEKNLRLQK…CGGEGRVQGE (86 aa)) adopts a CR-type zinc-finger fold. Cys153, Cys156, Cys173, Cys176, Cys199, Cys202, Cys213, and Cys216 together coordinate Zn(2+). CXXCXGXG motif repeat units follow at residues 153 to 160 (CESCDGTG), 173 to 180 (CPKCDGTG), 199 to 206 (CPRCEGEG), and 213 to 220 (CDDCGGEG). Positions 362-376 (AHDNFQPRPPEEDTQ) are enriched in basic and acidic residues. The disordered stretch occupies residues 362–388 (AHDNFQPRPPEEDTQKSFFRRVSDVFS).

This sequence belongs to the DnaJ family. Homodimer. Requires Zn(2+) as cofactor.

It is found in the cytoplasm. Functionally, participates actively in the response to hyperosmotic and heat shock by preventing the aggregation of stress-denatured proteins and by disaggregating proteins, also in an autonomous, DnaK-independent fashion. Unfolded proteins bind initially to DnaJ; upon interaction with the DnaJ-bound protein, DnaK hydrolyzes its bound ATP, resulting in the formation of a stable complex. GrpE releases ADP from DnaK; ATP binding to DnaK triggers the release of the substrate protein, thus completing the reaction cycle. Several rounds of ATP-dependent interactions between DnaJ, DnaK and GrpE are required for fully efficient folding. Also involved, together with DnaK and GrpE, in the DNA replication of plasmids through activation of initiation proteins. The sequence is that of Chaperone protein DnaJ from Salinibacter ruber (strain DSM 13855 / M31).